A 257-amino-acid polypeptide reads, in one-letter code: Acetylglutamate kinase (257 aa).

Residues 43–44 (GG), R65, and N157 each bind substrate. Residues 180–185 (DVSGIL) and 208–210 (IIT) each bind ATP.

The protein belongs to the acetylglutamate kinase family. ArgB subfamily. Homodimer.

It is found in the cytoplasm. It catalyses the reaction N-acetyl-L-glutamate + ATP = N-acetyl-L-glutamyl 5-phosphate + ADP. Its pathway is amino-acid biosynthesis; L-arginine biosynthesis; N(2)-acetyl-L-ornithine from L-glutamate: step 2/4. In terms of biological role, catalyzes the ATP-dependent phosphorylation of N-acetyl-L-glutamate. This chain is Acetylglutamate kinase, found in Edwardsiella ictaluri (strain 93-146).